Consider the following 232-residue polypeptide: Y-linked testis-specific protein 1 (232 aa).

Belongs to the SPIN/STSY family. Expressed in testis (at protein level).

This is Y-linked testis-specific protein 1 (Ssty1) from Mus musculus (Mouse).